A 364-amino-acid chain; its full sequence is Tripartite motif-containing protein 54 (364 aa).

Residues 26–82 (CPICLEMFSKPVVILPCQHNLCRKCANDVFQASNPLWQSRGSTTVSSGGRFRCPSCR) form an RING-type zinc finger. The B box-type zinc-finger motif lies at 121–163 (EQHLMCEEHEDEKINIYCLSCEVPTCSLCKVFGAHKDCEVAPL). The Zn(2+) site is built by C126, H129, C149, and H155. The segment at 168-211 (KRQKSELSDGIAMLVAGNDRVQAVITQMEEVCQTIEDNSRRQKQ) is mediates microtubule-binding and homooligomerization. A coiled-coil region spans residues 194 to 252 (QMEEVCQTIEDNSRRQKQLLNQKFETLCAVLEERKGELLQALARVQEEKLQRVRSLIRQ). A COS domain is found at 271–329 (MEEPQMALYLQQAKELINKVGAMSKVELAGRPEPGYESMEQFSVIVEHVAEMLRTIDFQ). The disordered stretch occupies residues 328 to 364 (FQPGASGDEEDDEVTLDGEEGNTGLEEERLDGPEGLH). The span at 334 to 347 (GDEEDDEVTLDGEE) shows a compositional bias: acidic residues. Residues 353–364 (EEERLDGPEGLH) show a composition bias toward basic and acidic residues.

Homooligomer and heterooligomer. Interacts with TRIM63 and probably with TRIM55. Interacts with tubulin.

The protein localises to the cytoplasm. It localises to the cytoskeleton. The protein resides in the myofibril. Its subcellular location is the sarcomere. It is found in the z line. Its function is as follows. May bind and stabilize microtubules during myotubes formation. In Rattus norvegicus (Rat), this protein is Tripartite motif-containing protein 54 (Trim54).